Consider the following 324-residue polypeptide: NADH-ubiquinone oxidoreductase chain 1 (324 aa).

The next 8 membrane-spanning stretches (helical) occupy residues 10-30 (MIMTLSYMIPILIAVAFLTLV), 76-96 (FLFILTPILALLLALTIWTPL), 107-127 (LGLLFLLAMSSLTVYSLLWSG), 143-163 (VAQTISYEVTLAIILLSTIML), 178-198 (PMYLIFSSWPLTMMWYISTLA), 229-249 (LFFLAEYANIMLMNTLTITLF), 260-280 (ELFSITLATKVLLLSSSFLWI), and 300-320 (FLPLTLAMCLWHTSMPISYAG).

This sequence belongs to the complex I subunit 1 family.

It localises to the mitochondrion inner membrane. It carries out the reaction a ubiquinone + NADH + 5 H(+)(in) = a ubiquinol + NAD(+) + 4 H(+)(out). Its function is as follows. Core subunit of the mitochondrial membrane respiratory chain NADH dehydrogenase (Complex I) that is believed to belong to the minimal assembly required for catalysis. Complex I functions in the transfer of electrons from NADH to the respiratory chain. The immediate electron acceptor for the enzyme is believed to be ubiquinone. The polypeptide is NADH-ubiquinone oxidoreductase chain 1 (MT-ND1) (Coturnix japonica (Japanese quail)).